Reading from the N-terminus, the 483-residue chain is Triacylglycerol lipase ptl3 (483 aa).

In terms of domain architecture, PNPLA spans Leu141–Thr340. Positions Gly145 to Gly150 match the GXGXXG motif. The GXSXG motif lies at Gly172–Gly176. Ser174 (nucleophile) is an active-site residue. Catalysis depends on Asp327, which acts as the Proton acceptor.

It localises to the cytoplasm. The protein localises to the lipid droplet. The catalysed reaction is a triacylglycerol + H2O = a diacylglycerol + a fatty acid + H(+). Its function is as follows. Lipid particle-localized triacylglycerol (TAG) lipase. The lipid droplet/particle is a lipid storage compartment which serves as a depot of energy and building blocks for membrane lipid biosynthesis. Involved in the mobilization of the non-polar storage lipids triacylglycerols (TAGs) from lipid particles by hydrolysis of TAGs, releasing and supplying specific fatty acids to the appropriate metabolic pathways. The polypeptide is Triacylglycerol lipase ptl3 (ptl3) (Schizosaccharomyces pombe (strain 972 / ATCC 24843) (Fission yeast)).